We begin with the raw amino-acid sequence, 250 residues long: Ubiquinone/menaquinone biosynthesis C-methyltransferase UbiE (250 aa).

S-adenosyl-L-methionine is bound by residues threonine 73, aspartate 94, 122–123 (NA), and serine 139.

It belongs to the class I-like SAM-binding methyltransferase superfamily. MenG/UbiE family.

The catalysed reaction is a 2-demethylmenaquinol + S-adenosyl-L-methionine = a menaquinol + S-adenosyl-L-homocysteine + H(+). The enzyme catalyses a 2-methoxy-6-(all-trans-polyprenyl)benzene-1,4-diol + S-adenosyl-L-methionine = a 5-methoxy-2-methyl-3-(all-trans-polyprenyl)benzene-1,4-diol + S-adenosyl-L-homocysteine + H(+). The protein operates within quinol/quinone metabolism; menaquinone biosynthesis; menaquinol from 1,4-dihydroxy-2-naphthoate: step 2/2. It participates in cofactor biosynthesis; ubiquinone biosynthesis. Functionally, methyltransferase required for the conversion of demethylmenaquinol (DMKH2) to menaquinol (MKH2) and the conversion of 2-polyprenyl-6-methoxy-1,4-benzoquinol (DDMQH2) to 2-polyprenyl-3-methyl-6-methoxy-1,4-benzoquinol (DMQH2). This Francisella tularensis subsp. mediasiatica (strain FSC147) protein is Ubiquinone/menaquinone biosynthesis C-methyltransferase UbiE.